A 246-amino-acid polypeptide reads, in one-letter code: Probable transcriptional regulatory protein TM1040_1893 (246 aa).

The tract at residues 1–21 (MAGHSKWANIQHRKGRQDAAR) is disordered.

This sequence belongs to the TACO1 family.

Its subcellular location is the cytoplasm. In Ruegeria sp. (strain TM1040) (Silicibacter sp.), this protein is Probable transcriptional regulatory protein TM1040_1893.